The sequence spans 374 residues: tRNA-specific 2-thiouridylase MnmA (374 aa).

Residues 16–23 (GMSGGVDS) and M42 each bind ATP. Residues 102-104 (NPD) are interaction with target base in tRNA. C107 (nucleophile) is an active-site residue. C107 and C203 are joined by a disulfide. G131 contacts ATP. Residues 153–155 (KDQ) are interaction with tRNA. C203 acts as the Cysteine persulfide intermediate in catalysis. Positions 311–312 (RY) are interaction with tRNA.

This sequence belongs to the MnmA/TRMU family.

The protein localises to the cytoplasm. It carries out the reaction S-sulfanyl-L-cysteinyl-[protein] + uridine(34) in tRNA + AH2 + ATP = 2-thiouridine(34) in tRNA + L-cysteinyl-[protein] + A + AMP + diphosphate + H(+). In terms of biological role, catalyzes the 2-thiolation of uridine at the wobble position (U34) of tRNA, leading to the formation of s(2)U34. The protein is tRNA-specific 2-thiouridylase MnmA of Exiguobacterium sibiricum (strain DSM 17290 / CCUG 55495 / CIP 109462 / JCM 13490 / 255-15).